Here is a 911-residue protein sequence, read N- to C-terminus: Protein translocase subunit SecA (911 aa).

ATP-binding positions include Gln-86, 104 to 108 (GEGKT), and Asp-512. The Zn(2+) site is built by Cys-895, Cys-897, Cys-906, and His-907.

The protein belongs to the SecA family. As to quaternary structure, monomer and homodimer. Part of the essential Sec protein translocation apparatus which comprises SecA, SecYEG and auxiliary proteins SecDF-YajC and YidC. The cofactor is Zn(2+).

The protein localises to the cell inner membrane. It is found in the cytoplasm. The enzyme catalyses ATP + H2O + cellular proteinSide 1 = ADP + phosphate + cellular proteinSide 2.. Part of the Sec protein translocase complex. Interacts with the SecYEG preprotein conducting channel. Has a central role in coupling the hydrolysis of ATP to the transfer of proteins into and across the cell membrane, serving both as a receptor for the preprotein-SecB complex and as an ATP-driven molecular motor driving the stepwise translocation of polypeptide chains across the membrane. This chain is Protein translocase subunit SecA, found in Bordetella bronchiseptica (strain ATCC BAA-588 / NCTC 13252 / RB50) (Alcaligenes bronchisepticus).